The sequence spans 283 residues: Daunorubicin resistance ABC transporter permease protein DrrB1 (283 aa).

The ABC transmembrane type-2 domain occupies 53–280; sequence VQLIDIVLMP…PLTMRLYRNK (228 aa). 6 helical membrane-spanning segments follow: residues 58-78, 85-105, 150-170, 171-191, 198-218, and 252-272; these read IVLM…GAFA, LQFY…VYTG, VFLG…VVGA, MLVL…LGVV, VSGT…IFVM, and FWDV…FAPL.

The protein belongs to the ABC-2 integral membrane protein family. As to quaternary structure, the complex is probably composed of two ATP-binding proteins (DrrA1) and two transmembrane proteins (DrrB1).

It localises to the cell membrane. Functionally, part of the ABC transporter complex DrrA1B1 involved in daunorubicin efflux. Responsible for the translocation of the substrate across the membrane. Confers self-resistance to daunorubicin, an antibiotic produced by S.coeruleorubidus. This chain is Daunorubicin resistance ABC transporter permease protein DrrB1, found in Streptomyces coeruleorubidus.